The following is a 430-amino-acid chain: Tol-Pal system protein TolB (430 aa).

The N-terminal stretch at 1 to 21 is a signal peptide; the sequence is MKQALRVAVSFFMLWAAVLHA.

This sequence belongs to the TolB family. As to quaternary structure, the Tol-Pal system is composed of five core proteins: the inner membrane proteins TolA, TolQ and TolR, the periplasmic protein TolB and the outer membrane protein Pal. They form a network linking the inner and outer membranes and the peptidoglycan layer.

It is found in the periplasm. Part of the Tol-Pal system, which plays a role in outer membrane invagination during cell division and is important for maintaining outer membrane integrity. TolB occupies a key intermediary position in the Tol-Pal system because it communicates directly with both membrane-embedded components, Pal in the outer membrane and TolA in the inner membrane. This Enterobacter sp. (strain 638) protein is Tol-Pal system protein TolB.